Here is a 335-residue protein sequence, read N- to C-terminus: 3-dehydroquinate synthase (335 aa).

Residues 56-61 (DGEKYK), 90-94 (GVITD), 114-115 (TT), Lys-127, Lys-135, and 153-156 (FLKT) contribute to the NAD(+) site. Positions 168, 227, and 243 each coordinate Zn(2+).

Belongs to the sugar phosphate cyclases superfamily. Dehydroquinate synthase family. Requires NAD(+) as cofactor. It depends on Co(2+) as a cofactor. Zn(2+) is required as a cofactor.

The protein localises to the cytoplasm. The catalysed reaction is 7-phospho-2-dehydro-3-deoxy-D-arabino-heptonate = 3-dehydroquinate + phosphate. It functions in the pathway metabolic intermediate biosynthesis; chorismate biosynthesis; chorismate from D-erythrose 4-phosphate and phosphoenolpyruvate: step 2/7. Catalyzes the conversion of 3-deoxy-D-arabino-heptulosonate 7-phosphate (DAHP) to dehydroquinate (DHQ). The sequence is that of 3-dehydroquinate synthase from Pyrococcus furiosus (strain ATCC 43587 / DSM 3638 / JCM 8422 / Vc1).